Consider the following 533-residue polypeptide: MKRFFSKLFSKSPTSGRVPSPDSDYSEEEQRLLAEENGYFQDSNEYVEPNIPAVYGSMIPVAQQLQQHHVHTPGESFADNASGYPVIKHELSELLRLGSPTVIAYLLQSSEQFSTVFTLGHLGKEYLAASSLSTMTAAISAFSIFQGVISSLDTLATQAFGANKPYNVAIYLQRCLLILAVLHIPVALIWLNLEHILIFLHQDPMVAHLCGRYMRVFILAAPGYAVFEALKRYLQAQGIFTPITYVLCFAAPLNILLNYLLVWHPTIGFGFLGAPVAVATTFWFQSICLILYICFSSTPIPWPGFSRQALKNLSPMLHFSFHGMLMIVTEWAAYEMTSLGAGYLGTAPLASQSILLTSTSLLFQIPFAFAVASSTRVGHLIGSGRANLARLCSRVAYSLALCISIFDGSLIFCFRDVWGSLFTSDPEVLAVVKDIFPILSLFIVTDGLNAVGGGLLRGTGKQYIGGLISIGSSYLFALPVTVFVVVYFNTGLKGIWCGMILSSVTAITCQFTVLFNTDWHRVLQEARHRLTHV.

Residues 1 to 26 (MKRFFSKLFSKSPTSGRVPSPDSDYS) form a disordered region. Phosphoserine is present on residues S20 and S23. The residue at position 25 (Y25) is a Phosphotyrosine. S26 carries the post-translational modification Phosphoserine. 10 helical membrane-spanning segments follow: residues 178 to 198 (ILAV…HILI), 213 to 230 (YMRV…FEAL), 242 to 264 (PITY…LVWH), 274 to 296 (APVA…ICFS), 313 to 333 (LSPM…EWAA), 353 to 373 (SILL…AVAS), 394 to 414 (RVAY…IFCF), 435 to 455 (IFPI…GGGL), 466 to 486 (GLIS…FVVV), and 495 to 515 (IWCG…TVLF).

The protein belongs to the multi antimicrobial extrusion (MATE) (TC 2.A.66.1) family.

The protein resides in the vacuole membrane. This is an uncharacterized protein from Schizosaccharomyces pombe (strain 972 / ATCC 24843) (Fission yeast).